The chain runs to 267 residues: tRNA (guanine-N(1)-)-methyltransferase (267 aa).

Residues G119 and 139-144 contribute to the S-adenosyl-L-methionine site; that span reads IGDYVL.

This sequence belongs to the RNA methyltransferase TrmD family. In terms of assembly, homodimer.

The protein resides in the cytoplasm. The catalysed reaction is guanosine(37) in tRNA + S-adenosyl-L-methionine = N(1)-methylguanosine(37) in tRNA + S-adenosyl-L-homocysteine + H(+). Specifically methylates guanosine-37 in various tRNAs. In Chromohalobacter salexigens (strain ATCC BAA-138 / DSM 3043 / CIP 106854 / NCIMB 13768 / 1H11), this protein is tRNA (guanine-N(1)-)-methyltransferase.